The sequence spans 631 residues: Extracellular metalloproteinase mep (631 aa).

Residues 1 to 19 form the signal peptide; the sequence is MHGLRLVCSIGTLPLVILA. Positions 20–241 are excised as a propeptide; sequence YPAASLHTTS…VHGVVDYVAD (222 aa). 3 N-linked (GlcNAc...) asparagine glycosylation sites follow: asparagine 282, asparagine 332, and asparagine 364. A Zn(2+)-binding site is contributed by histidine 425. Glutamate 426 is a catalytic residue. Histidine 429 contributes to the Zn(2+) binding site. N-linked (GlcNAc...) asparagine glycans are attached at residues asparagine 470 and asparagine 505.

It belongs to the peptidase M36 family. Requires Zn(2+) as cofactor.

It localises to the secreted. Its function is as follows. Secreted metalloproteinase that allows assimilation of proteinaceous substrates. The sequence is that of Extracellular metalloproteinase mep (mep) from Aspergillus niger (strain ATCC MYA-4892 / CBS 513.88 / FGSC A1513).